The following is a 665-amino-acid chain: Succinate dehydrogenase [ubiquinone] flavoprotein subunit A, mitochondrial (665 aa).

Residues 1 to 45 (MALLKVAPSRLLSRALQLASRVQNCTPTVTTARRNFHFTVYGRKD) constitute a mitochondrion transit peptide. 5 residues coordinate FAD: Ala72, Ala75, Thr94, Lys95, and Ser101. A Tele-8alpha-FAD histidine modification is found at His102. Positions 103, 108, 224, and 278 each coordinate FAD. His299, Arg343, and His410 together coordinate oxaloacetate. The Proton acceptor role is filled by Arg343. Glu443 serves as a coordination point for FAD. Arg454 and Ala457 together coordinate oxaloacetate. Residues Ser459 and Leu460 each contribute to the FAD site.

This sequence belongs to the FAD-dependent oxidoreductase 2 family. FRD/SDH subfamily. In terms of assembly, component of complex II composed of four subunits: a flavoprotein (FP), an iron-sulfur protein (IP), and a cytochrome b composed of a large and a small subunit. FAD is required as a cofactor.

The protein localises to the mitochondrion inner membrane. It catalyses the reaction a ubiquinone + succinate = a ubiquinol + fumarate. The catalysed reaction is (R)-malate + a quinone = enol-oxaloacetate + a quinol. It carries out the reaction (S)-malate + a quinone = enol-oxaloacetate + a quinol. The protein operates within carbohydrate metabolism; tricarboxylic acid cycle; fumarate from succinate (eukaryal route): step 1/1. With respect to regulation, enol-oxaloacetate inhibits the succinate dehydrogenase activity. Functionally, flavoprotein (FP) subunit of succinate dehydrogenase (SDH) that is involved in complex II of the mitochondrial electron transport chain and is responsible for transferring electrons from succinate to ubiquinone (coenzyme Q). SDH also oxidizes malate to the non-canonical enol form of oxaloacetate, enol-oxaloacetate. Enol-oxaloacetate, which is a potent inhibitor of the succinate dehydrogenase activity, is further isomerized into keto-oxaloacetate. The polypeptide is Succinate dehydrogenase [ubiquinone] flavoprotein subunit A, mitochondrial (sdha-a) (Xenopus laevis (African clawed frog)).